We begin with the raw amino-acid sequence, 446 residues long: tRNA modification GTPase MnmE (446 aa).

Residues Arg-28, Glu-85, and Lys-124 each coordinate (6S)-5-formyl-5,6,7,8-tetrahydrofolate. Residues 220–372 (GLTVVLVGQP…LRAKLLQAAG (153 aa)) form the TrmE-type G domain. Asn-230 lines the K(+) pocket. GTP contacts are provided by residues 230 to 235 (NVGKSS), 249 to 255 (TEIAGTT), and 274 to 277 (DTAG). Ser-234 contributes to the Mg(2+) binding site. 3 residues coordinate K(+): Thr-249, Ile-251, and Thr-254. Mg(2+) is bound at residue Thr-255. Lys-446 is a binding site for (6S)-5-formyl-5,6,7,8-tetrahydrofolate.

This sequence belongs to the TRAFAC class TrmE-Era-EngA-EngB-Septin-like GTPase superfamily. TrmE GTPase family. In terms of assembly, homodimer. Heterotetramer of two MnmE and two MnmG subunits. It depends on K(+) as a cofactor.

It localises to the cytoplasm. In terms of biological role, exhibits a very high intrinsic GTPase hydrolysis rate. Involved in the addition of a carboxymethylaminomethyl (cmnm) group at the wobble position (U34) of certain tRNAs, forming tRNA-cmnm(5)s(2)U34. The protein is tRNA modification GTPase MnmE of Thiobacillus denitrificans (strain ATCC 25259 / T1).